Consider the following 207-residue polypeptide: Uridine kinase (207 aa).

ATP is bound at residue 11-18; sequence GGSGSGKT.

The protein belongs to the uridine kinase family.

It is found in the cytoplasm. The enzyme catalyses uridine + ATP = UMP + ADP + H(+). It carries out the reaction cytidine + ATP = CMP + ADP + H(+). The protein operates within pyrimidine metabolism; CTP biosynthesis via salvage pathway; CTP from cytidine: step 1/3. It participates in pyrimidine metabolism; UMP biosynthesis via salvage pathway; UMP from uridine: step 1/1. The sequence is that of Uridine kinase from Staphylococcus haemolyticus (strain JCSC1435).